The sequence spans 122 residues: MARIAGVNIPTNKRVVIALQYIHGIGPRFAQEITKKVGIPVGRRVCELSDAEVLQIREAIDQGYKVEGDLRREVAVNVKRLMDLGCYRGLRHRRSLPVRGQRTHTNARTRKGPAKAIAGKKK.

Residues 97–122 (PVRGQRTHTNARTRKGPAKAIAGKKK) are disordered.

The protein belongs to the universal ribosomal protein uS13 family. As to quaternary structure, part of the 30S ribosomal subunit. Forms a loose heterodimer with protein S19. Forms two bridges to the 50S subunit in the 70S ribosome.

Its function is as follows. Located at the top of the head of the 30S subunit, it contacts several helices of the 16S rRNA. In the 70S ribosome it contacts the 23S rRNA (bridge B1a) and protein L5 of the 50S subunit (bridge B1b), connecting the 2 subunits; these bridges are implicated in subunit movement. Contacts the tRNAs in the A and P-sites. The polypeptide is Small ribosomal subunit protein uS13 (Bartonella quintana (strain Toulouse) (Rochalimaea quintana)).